The following is a 271-amino-acid chain: Hydroxyethylthiazole kinase (271 aa).

Residue methionine 45 participates in substrate binding. The ATP site is built by arginine 121 and threonine 168. Glycine 195 is a binding site for substrate.

This sequence belongs to the Thz kinase family. The cofactor is Mg(2+).

It catalyses the reaction 5-(2-hydroxyethyl)-4-methylthiazole + ATP = 4-methyl-5-(2-phosphooxyethyl)-thiazole + ADP + H(+). Its pathway is cofactor biosynthesis; thiamine diphosphate biosynthesis; 4-methyl-5-(2-phosphoethyl)-thiazole from 5-(2-hydroxyethyl)-4-methylthiazole: step 1/1. Its function is as follows. Catalyzes the phosphorylation of the hydroxyl group of 4-methyl-5-beta-hydroxyethylthiazole (THZ). This is Hydroxyethylthiazole kinase from Bacillus pumilus (strain SAFR-032).